The following is a 478-amino-acid chain: Signal recognition particle receptor FtsY (478 aa).

2 stretches are compositionally biased toward basic and acidic residues: residues 14-33 and 45-56; these read KDKAETEERPQEDAALERGN and AEAHDAVDKDPV. Positions 14–94 are disordered; that stretch reads KDKAETEERP…DAPLLPGAEL (81 aa). Positions 71-86 are enriched in acidic residues; the sequence is EAVDVAPAEDDEEEDA. GTP-binding positions include 283-290, 365-369, and 429-432; these read GVNGTGKT, DTAGR, and TKLD.

It belongs to the GTP-binding SRP family. FtsY subfamily. In terms of assembly, part of the signal recognition particle protein translocation system, which is composed of SRP and FtsY. SRP is a ribonucleoprotein composed of Ffh and a 4.5S RNA molecule.

Its subcellular location is the cell inner membrane. The protein localises to the cytoplasm. It catalyses the reaction GTP + H2O = GDP + phosphate + H(+). Functionally, involved in targeting and insertion of nascent membrane proteins into the cytoplasmic membrane. Acts as a receptor for the complex formed by the signal recognition particle (SRP) and the ribosome-nascent chain (RNC). Interaction with SRP-RNC leads to the transfer of the RNC complex to the Sec translocase for insertion into the membrane, the hydrolysis of GTP by both Ffh and FtsY, and the dissociation of the SRP-FtsY complex into the individual components. The chain is Signal recognition particle receptor FtsY from Agrobacterium fabrum (strain C58 / ATCC 33970) (Agrobacterium tumefaciens (strain C58)).